The primary structure comprises 341 residues: tRNA N6-adenosine threonylcarbamoyltransferase (341 aa).

The Fe cation site is built by His115 and His119. Substrate-binding positions include 137-141 (IVSGG), Asp170, Gly183, Asp187, and Asn276. Asp304 provides a ligand contact to Fe cation.

This sequence belongs to the KAE1 / TsaD family. Fe(2+) serves as cofactor.

Its subcellular location is the cytoplasm. It catalyses the reaction L-threonylcarbamoyladenylate + adenosine(37) in tRNA = N(6)-L-threonylcarbamoyladenosine(37) in tRNA + AMP + H(+). Functionally, required for the formation of a threonylcarbamoyl group on adenosine at position 37 (t(6)A37) in tRNAs that read codons beginning with adenine. Is involved in the transfer of the threonylcarbamoyl moiety of threonylcarbamoyl-AMP (TC-AMP) to the N6 group of A37, together with TsaE and TsaB. TsaD likely plays a direct catalytic role in this reaction. In Staphylococcus aureus (strain MRSA252), this protein is tRNA N6-adenosine threonylcarbamoyltransferase.